A 304-amino-acid chain; its full sequence is tRNA pseudouridine synthase B (304 aa).

Residue Asp-38 is the Nucleophile of the active site. The 76-residue stretch at 227 to 302 folds into the PUA domain; it reads LPKVEIYKDF…RIFKLKKVFK (76 aa).

The protein belongs to the pseudouridine synthase TruB family. Type 1 subfamily.

The enzyme catalyses uridine(55) in tRNA = pseudouridine(55) in tRNA. Functionally, responsible for synthesis of pseudouridine from uracil-55 in the psi GC loop of transfer RNAs. The polypeptide is tRNA pseudouridine synthase B (Thermosipho melanesiensis (strain DSM 12029 / CIP 104789 / BI429)).